A 272-amino-acid polypeptide reads, in one-letter code: Putative pyruvate, phosphate dikinase regulatory protein 2 (272 aa).

Position 154 to 161 (154 to 161) interacts with ADP; the sequence is GVSRTSKT.

Belongs to the pyruvate, phosphate/water dikinase regulatory protein family. PDRP subfamily.

The catalysed reaction is N(tele)-phospho-L-histidyl/L-threonyl-[pyruvate, phosphate dikinase] + ADP = N(tele)-phospho-L-histidyl/O-phospho-L-threonyl-[pyruvate, phosphate dikinase] + AMP + H(+). It catalyses the reaction N(tele)-phospho-L-histidyl/O-phospho-L-threonyl-[pyruvate, phosphate dikinase] + phosphate + H(+) = N(tele)-phospho-L-histidyl/L-threonyl-[pyruvate, phosphate dikinase] + diphosphate. In terms of biological role, bifunctional serine/threonine kinase and phosphorylase involved in the regulation of the pyruvate, phosphate dikinase (PPDK) by catalyzing its phosphorylation/dephosphorylation. The polypeptide is Putative pyruvate, phosphate dikinase regulatory protein 2 (Staphylococcus epidermidis (strain ATCC 35984 / DSM 28319 / BCRC 17069 / CCUG 31568 / BM 3577 / RP62A)).